The sequence spans 172 residues: 3-hydroxydecanoyl-[acyl-carrier-protein] dehydratase (172 aa).

The active site involves His-71.

It belongs to the thioester dehydratase family. FabA subfamily. As to quaternary structure, homodimer.

It is found in the cytoplasm. It catalyses the reaction a (3R)-hydroxyacyl-[ACP] = a (2E)-enoyl-[ACP] + H2O. The catalysed reaction is (3R)-hydroxydecanoyl-[ACP] = (2E)-decenoyl-[ACP] + H2O. The enzyme catalyses (2E)-decenoyl-[ACP] = (3Z)-decenoyl-[ACP]. Its pathway is lipid metabolism; fatty acid biosynthesis. Its function is as follows. Necessary for the introduction of cis unsaturation into fatty acids. Catalyzes the dehydration of (3R)-3-hydroxydecanoyl-ACP to E-(2)-decenoyl-ACP and then its isomerization to Z-(3)-decenoyl-ACP. Can catalyze the dehydratase reaction for beta-hydroxyacyl-ACPs with saturated chain lengths up to 16:0, being most active on intermediate chain length. The sequence is that of 3-hydroxydecanoyl-[acyl-carrier-protein] dehydratase from Vibrio cholerae serotype O1 (strain ATCC 39541 / Classical Ogawa 395 / O395).